The chain runs to 589 residues: ATP-dependent lipid A-core flippase (589 aa).

The next 5 membrane-spanning stretches (helical) occupy residues 23-43 (WPIFLIGVVGMIAVSLSDAGF), 60-80 (LVFIRWLPFIIVLVFLFRGAA), 153-173 (VGLLVVMFLVSWKLTLFFLVI), 249-269 (VGTSLVQLLIAIPIAIVLFFA), and 272-292 (PSFHVTAGSFASIVSAMIMML). Positions 27–307 (LIGVVGMIAV…LTMVNSYIQK (281 aa)) constitute an ABC transmembrane type-1 domain. Residues 339–575 (IEYQGVSFAY…NGAYAELYRM (237 aa)) enclose the ABC transporter domain. ATP is bound at residue 373 to 380 (GRSGAGKS).

It belongs to the ABC transporter superfamily. Lipid exporter (TC 3.A.1.106) family. In terms of assembly, homodimer.

The protein resides in the cell inner membrane. It carries out the reaction ATP + H2O + lipid A-core oligosaccharideSide 1 = ADP + phosphate + lipid A-core oligosaccharideSide 2.. Its function is as follows. Involved in lipopolysaccharide (LPS) biosynthesis. Translocates lipid A-core from the inner to the outer leaflet of the inner membrane. Transmembrane domains (TMD) form a pore in the inner membrane and the ATP-binding domain (NBD) is responsible for energy generation. In Coxiella burnetii (strain RSA 493 / Nine Mile phase I), this protein is ATP-dependent lipid A-core flippase.